Reading from the N-terminus, the 783-residue chain is Probable phosphoketolase (783 aa).

Belongs to the XFP family. Requires thiamine diphosphate as cofactor.

The sequence is that of Probable phosphoketolase from Rhodopseudomonas palustris (strain ATCC BAA-98 / CGA009).